An 854-amino-acid chain; its full sequence is Alkaline phosphatase-like protein PglZ (854 aa).

It belongs to the alkaline phosphatase superfamily.

BREX systems (bacteriophage exclusion) provide immunity against bacteriophage. A core protein of a type 1 BREX system. This system allows phage adsorption but prevents phage DNA replication, without degradation of the phage DNA. Methylation of bacterial DNA by PglX probably guides self/non-self discrimination. When the brxA-brxB-brxC-pglX and pglZ-brxL operons are transformed into a susceptible B.subtilis strain (BEST7003) they confer resistance to bacteriophages SPbeta, SP16, Zeta, phi3T and SP02 and partial protection to phages SP01 and SP82G (these include lytic and temperate phage). They do not protect against phages phi105, rho10 or rho14. Additionally confers a very slight reduction in efficiency of plasmid transformation. The sequence is that of Alkaline phosphatase-like protein PglZ from Bacillus cereus (strain H3081.97).